A 166-amino-acid polypeptide reads, in one-letter code: RNA polymerase sigma factor SigV (166 aa).

Residues 38–51 (DIVQESIKKALSSV) carry the Polymerase core binding motif. Residues 131–150 (LEEIAEITGENTNTVKTRLY) constitute a DNA-binding region (H-T-H motif).

Belongs to the sigma-70 factor family. ECF subfamily. Interacts with RsiV.

Sigma factors are initiation factors that promote the attachment of RNA polymerase to specific initiation sites and are then released. Positively regulates the expression of proteins involved in stress responses against bacitracin, paraquat and tellurite. This is RNA polymerase sigma factor SigV (sigV) from Bacillus subtilis (strain 168).